The following is a 226-amino-acid chain: Leucyl/phenylalanyl-tRNA--protein transferase (226 aa).

Belongs to the L/F-transferase family.

It localises to the cytoplasm. It carries out the reaction N-terminal L-lysyl-[protein] + L-leucyl-tRNA(Leu) = N-terminal L-leucyl-L-lysyl-[protein] + tRNA(Leu) + H(+). It catalyses the reaction N-terminal L-arginyl-[protein] + L-leucyl-tRNA(Leu) = N-terminal L-leucyl-L-arginyl-[protein] + tRNA(Leu) + H(+). The enzyme catalyses L-phenylalanyl-tRNA(Phe) + an N-terminal L-alpha-aminoacyl-[protein] = an N-terminal L-phenylalanyl-L-alpha-aminoacyl-[protein] + tRNA(Phe). Its function is as follows. Functions in the N-end rule pathway of protein degradation where it conjugates Leu, Phe and, less efficiently, Met from aminoacyl-tRNAs to the N-termini of proteins containing an N-terminal arginine or lysine. This is Leucyl/phenylalanyl-tRNA--protein transferase from Pseudomonas putida (strain ATCC 47054 / DSM 6125 / CFBP 8728 / NCIMB 11950 / KT2440).